Here is a 63-residue protein sequence, read N- to C-terminus: Large ribosomal subunit protein uL29 (63 aa).

This sequence belongs to the universal ribosomal protein uL29 family.

The polypeptide is Large ribosomal subunit protein uL29 (Flavobacterium johnsoniae (strain ATCC 17061 / DSM 2064 / JCM 8514 / BCRC 14874 / CCUG 350202 / NBRC 14942 / NCIMB 11054 / UW101) (Cytophaga johnsonae)).